Consider the following 133-residue polypeptide: Nodulation protein K (133 aa).

The polypeptide is Nodulation protein K (nodK) (Bradyrhizobium elkanii).